A 198-amino-acid chain; its full sequence is Pyridoxal 5'-phosphate synthase subunit PdxT (198 aa).

52–54 (GES) contacts L-glutamine. The active-site Nucleophile is Cys84. L-glutamine contacts are provided by residues Arg115 and 143–144 (IR). Catalysis depends on charge relay system residues His179 and Glu181.

This sequence belongs to the glutaminase PdxT/SNO family. As to quaternary structure, in the presence of PdxS, forms a dodecamer of heterodimers. Only shows activity in the heterodimer.

It carries out the reaction aldehydo-D-ribose 5-phosphate + D-glyceraldehyde 3-phosphate + L-glutamine = pyridoxal 5'-phosphate + L-glutamate + phosphate + 3 H2O + H(+). The enzyme catalyses L-glutamine + H2O = L-glutamate + NH4(+). Its pathway is cofactor biosynthesis; pyridoxal 5'-phosphate biosynthesis. In terms of biological role, catalyzes the hydrolysis of glutamine to glutamate and ammonia as part of the biosynthesis of pyridoxal 5'-phosphate. The resulting ammonia molecule is channeled to the active site of PdxS. In Methanococcoides burtonii (strain DSM 6242 / NBRC 107633 / OCM 468 / ACE-M), this protein is Pyridoxal 5'-phosphate synthase subunit PdxT.